Reading from the N-terminus, the 240-residue chain is Putative RING finger protein ORF96 (240 aa).

An RING-type 1 zinc finger spans residues 9 to 44 (CVVCMEEKPLVVFEPCMHHNCCESCSGHVSNCPYCR). The segment at 150–202 (CVICKKEIKEEVGKTYMHACCTATICKPCAKAILKAMVEKEITENLPFCPYCF) adopts an RING-type 2; degenerate zinc-finger fold.

This Ostreid herpesvirus 1 (isolate France) (OsHV-1) protein is Putative RING finger protein ORF96.